The chain runs to 207 residues: MANVKLFDQTGKEVSTVELNDAIFGIEPNESVVFDVVISQRASLRQGTHAVKNRSAVSGGGRKPWRQKGTGRARQGSIRSPQWRGGGVVFGPTPRSYGYKLPQKVRRLALKSVYSAKVAEDKFVAVESLSFAAPKTAEFAKVLSALSIDTKVLVLVEEGNEFAALSARNLPNVAVATAATASVLDIVNADKLLVTKEAISTIEEVLA.

The interval 49–78 (HAVKNRSAVSGGGRKPWRQKGTGRARQGSI) is disordered.

Belongs to the universal ribosomal protein uL4 family. As to quaternary structure, part of the 50S ribosomal subunit.

In terms of biological role, one of the primary rRNA binding proteins, this protein initially binds near the 5'-end of the 23S rRNA. It is important during the early stages of 50S assembly. It makes multiple contacts with different domains of the 23S rRNA in the assembled 50S subunit and ribosome. Its function is as follows. Forms part of the polypeptide exit tunnel. The protein is Large ribosomal subunit protein uL4 of Streptococcus equi subsp. zooepidemicus (strain H70).